Here is a 501-residue protein sequence, read N- to C-terminus: L-aspartate decarboxylase dtxS4 (501 aa).

106-108 serves as a coordination point for substrate; that stretch reads KLT. Lys320 carries the N6-(pyridoxal phosphate)lysine modification. Arg474 provides a ligand contact to substrate.

This sequence belongs to the group II decarboxylase family. Pyridoxal 5'-phosphate is required as a cofactor.

The enzyme catalyses L-aspartate + H(+) = beta-alanine + CO2. The protein operates within secondary metabolite biosynthesis. Its function is as follows. L-aspartate decarboxylase; part of the gene cluster that mediates the biosynthesis of destruxins, insecticidal cyclic hexadepsipeptides which induce flaccid paralysis and visceral muscle contraction in insects through targeting the calcium channels and vacuolar-type ATPases. The aldo-keto reductase dtxS3 converts alpha-ketoisocaproic acid from deaminated leucine into alpha-hydroxyisocaproic acid (HIC), which is the first substrate for destruxin assembly by dtxS1. L-aspartate decarboxylase dtxS4 converts aspartic acid into beta-alanine, the last substrate for the destruxin assembly line performed by dtxS1. The nonribosomal peptide synthetase dtxS1 synthesizes destruxins B and B2, whereas the cytochrome P450 monooxygenase dtxS2 is required to convert destruxin B into other destruxin derivatives, including destructins C, D, A and E. Destruxin E-diol (ED) is further produced in a non-enzymatic manner from destruxin E. Destruxins play an important role in virulence and escape from insect host immune defenses. The protein is L-aspartate decarboxylase dtxS4 of Metarhizium robertsii (strain ARSEF 23 / ATCC MYA-3075) (Metarhizium anisopliae (strain ARSEF 23)).